Consider the following 868-residue polypeptide: Monofunctional pimaradiene synthase (868 aa).

Mg(2+) is bound by residues D620, D624, N764, T768, and E772.

This sequence belongs to the terpene synthase family. Tpsd subfamily. Requires Mg(2+) as cofactor.

It carries out the reaction (+)-copalyl diphosphate = (-)-pimara-8(14),15-diene + diphosphate. It participates in terpene metabolism; oleoresin biosynthesis. Functionally, involved in defensive oleoresin formation in conifers in response to insect attack or other injury. Involved in diterpene (C20) olefins biosynthesis. Monofunctional enzyme lacking the DXDD motif in the class II active site relevant for the cyclization of geranylgeranyl diphosphate (GGPP). Requires (+)-copalyl diphosphate ((+)-CPP) as substrate, but no activity with GGPP or ent-CPP. Pimaradiene is the major products of the enzyme. The polypeptide is Monofunctional pimaradiene synthase (Pinus banksiana (Jack pine)).